The sequence spans 295 residues: GTPase Era (295 aa).

An Era-type G domain is found at 5 to 172 (YCGYAAIIGR…EQAVHQLMPE (168 aa)). Residues 13–20 (GRPNVGKS) are G1. 13–20 (GRPNVGKS) contacts GTP. The segment at 39–43 (QTTRY) is G2. Positions 60-63 (DTPG) are G3. Residues 60 to 64 (DTPGL) and 121 to 124 (NKVD) each bind GTP. The interval 121-124 (NKVD) is G4. The interval 151-153 (LSA) is G5. Residues 203–279 (LGQEIPYSLA…FLQLWVKVKS (77 aa)) enclose the KH type-2 domain.

This sequence belongs to the TRAFAC class TrmE-Era-EngA-EngB-Septin-like GTPase superfamily. Era GTPase family. As to quaternary structure, monomer.

It is found in the cytoplasm. Its subcellular location is the cell inner membrane. In terms of biological role, an essential GTPase that binds both GDP and GTP, with rapid nucleotide exchange. Plays a role in 16S rRNA processing and 30S ribosomal subunit biogenesis and possibly also in cell cycle regulation and energy metabolism. The polypeptide is GTPase Era (Coxiella burnetii (strain CbuK_Q154) (Coxiella burnetii (strain Q154))).